Reading from the N-terminus, the 371-residue chain is Histidinol-phosphate aminotransferase (371 aa).

Lys227 is subject to N6-(pyridoxal phosphate)lysine.

Belongs to the class-II pyridoxal-phosphate-dependent aminotransferase family. Histidinol-phosphate aminotransferase subfamily. As to quaternary structure, homodimer. Pyridoxal 5'-phosphate serves as cofactor.

The catalysed reaction is L-histidinol phosphate + 2-oxoglutarate = 3-(imidazol-4-yl)-2-oxopropyl phosphate + L-glutamate. Its pathway is amino-acid biosynthesis; L-histidine biosynthesis; L-histidine from 5-phospho-alpha-D-ribose 1-diphosphate: step 7/9. The chain is Histidinol-phosphate aminotransferase from Sphingopyxis alaskensis (strain DSM 13593 / LMG 18877 / RB2256) (Sphingomonas alaskensis).